The sequence spans 274 residues: 2,3,4,5-tetrahydropyridine-2,6-dicarboxylate N-succinyltransferase (274 aa).

Substrate-binding residues include arginine 104 and aspartate 141.

Belongs to the transferase hexapeptide repeat family. As to quaternary structure, homotrimer.

Its subcellular location is the cytoplasm. The enzyme catalyses (S)-2,3,4,5-tetrahydrodipicolinate + succinyl-CoA + H2O = (S)-2-succinylamino-6-oxoheptanedioate + CoA. It functions in the pathway amino-acid biosynthesis; L-lysine biosynthesis via DAP pathway; LL-2,6-diaminopimelate from (S)-tetrahydrodipicolinate (succinylase route): step 1/3. The protein is 2,3,4,5-tetrahydropyridine-2,6-dicarboxylate N-succinyltransferase of Shewanella sediminis (strain HAW-EB3).